A 420-amino-acid polypeptide reads, in one-letter code: Subtilisin-like protease 7 (420 aa).

The signal sequence occupies residues 1–20 (MGFITKAIPLALAAASVING). A propeptide spanning residues 21 to 119 (AEIMETRAGV…IERDARVQIN (99 aa)) is cleaved from the precursor. The 83-residue stretch at 36-118 (KYIVVMNDGM…YIERDARVQI (83 aa)) folds into the Inhibitor I9 domain. The Peptidase S8 domain maps to 129-413 (SWGLARVGSK…SFPLNIYEEQ (285 aa)). Residues aspartate 161 and histidine 192 each act as charge relay system in the active site. N-linked (GlcNAc...) asparagine glycans are attached at residues asparagine 222 and asparagine 252. The active-site Charge relay system is serine 346. An N-linked (GlcNAc...) asparagine glycan is attached at asparagine 396.

This sequence belongs to the peptidase S8 family.

Its subcellular location is the secreted. Secreted subtilisin-like serine protease with keratinolytic activity that contributes to pathogenicity. This Arthroderma benhamiae (strain ATCC MYA-4681 / CBS 112371) (Trichophyton mentagrophytes) protein is Subtilisin-like protease 7 (SUB7).